Reading from the N-terminus, the 500-residue chain is Cytochrome P450 2D4 (500 aa).

C446 provides a ligand contact to heme.

The protein belongs to the cytochrome P450 family. Heme serves as cofactor. As to expression, brain.

The protein resides in the endoplasmic reticulum membrane. It is found in the microsome membrane. It catalyses the reaction an organic molecule + reduced [NADPH--hemoprotein reductase] + O2 = an alcohol + oxidized [NADPH--hemoprotein reductase] + H2O + H(+). Functionally, cytochromes P450 are a group of heme-thiolate monooxygenases. In liver microsomes, this enzyme is involved in an NADPH-dependent electron transport pathway. It oxidizes a variety of structurally unrelated compounds, including steroids, fatty acids, and xenobiotics. This chain is Cytochrome P450 2D4 (Cyp2d4), found in Rattus norvegicus (Rat).